A 339-amino-acid polypeptide reads, in one-letter code: Fructose-1,6-bisphosphatase class 1 (339 aa).

Residues E101, D120, L122, and D123 each contribute to the Mg(2+) site. Residues D123–S126, N215, and K281 each bind substrate. A Mg(2+)-binding site is contributed by E287.

It belongs to the FBPase class 1 family. In terms of assembly, homotetramer. Requires Mg(2+) as cofactor.

It localises to the cytoplasm. It carries out the reaction beta-D-fructose 1,6-bisphosphate + H2O = beta-D-fructose 6-phosphate + phosphate. The protein operates within carbohydrate biosynthesis; gluconeogenesis. The protein is Fructose-1,6-bisphosphatase class 1 of Polynucleobacter necessarius subsp. necessarius (strain STIR1).